Reading from the N-terminus, the 164-residue chain is FMN reductase (NADH) RutF (164 aa).

This sequence belongs to the non-flavoprotein flavin reductase family. RutF subfamily.

The enzyme catalyses FMNH2 + NAD(+) = FMN + NADH + 2 H(+). Catalyzes the reduction of FMN to FMNH2 which is used to reduce pyrimidine by RutA via the Rut pathway. This is FMN reductase (NADH) RutF from Escherichia coli O150:H5 (strain SE15).